A 372-amino-acid polypeptide reads, in one-letter code: tRNA-specific 2-thiouridylase MnmA (372 aa).

ATP contacts are provided by residues 17-24 and methionine 43; that span reads GMSGGVDS. Positions 103–105 are interaction with target base in tRNA; the sequence is NPD. Cysteine 108 functions as the Nucleophile in the catalytic mechanism. Cysteines 108 and 207 form a disulfide. An ATP-binding site is contributed by glycine 133. Residues 157–159 form an interaction with tRNA region; the sequence is KDQ. The active-site Cysteine persulfide intermediate is cysteine 207. Positions 319–320 are interaction with tRNA; sequence RY.

The protein belongs to the MnmA/TRMU family.

The protein resides in the cytoplasm. The catalysed reaction is S-sulfanyl-L-cysteinyl-[protein] + uridine(34) in tRNA + AH2 + ATP = 2-thiouridine(34) in tRNA + L-cysteinyl-[protein] + A + AMP + diphosphate + H(+). Its function is as follows. Catalyzes the 2-thiolation of uridine at the wobble position (U34) of tRNA, leading to the formation of s(2)U34. The sequence is that of tRNA-specific 2-thiouridylase MnmA from Vibrio cholerae serotype O1 (strain ATCC 39541 / Classical Ogawa 395 / O395).